Reading from the N-terminus, the 258-residue chain is Cytochrome P450 1A2 (258 aa).

The protein belongs to the cytochrome P450 family. It depends on heme as a cofactor.

The protein localises to the endoplasmic reticulum membrane. The protein resides in the microsome membrane. It carries out the reaction an organic molecule + reduced [NADPH--hemoprotein reductase] + O2 = an alcohol + oxidized [NADPH--hemoprotein reductase] + H2O + H(+). In terms of biological role, cytochromes P450 are a group of heme-thiolate monooxygenases. In liver microsomes, this enzyme is involved in an NADPH-dependent electron transport pathway. It oxidizes a variety of structurally unrelated compounds, including steroids, fatty acids, and xenobiotics. This is Cytochrome P450 1A2 (CYP1A2) from Gallus gallus (Chicken).